Reading from the N-terminus, the 454-residue chain is Glutamate mutase epsilon subunit (454 aa).

Position 67 (Arg67) interacts with L-glutamate. Residue Gly69 coordinates adenosylcob(III)alamin. Arg99 is a binding site for L-glutamate. Adenosylcob(III)alamin is bound at residue Asn122. L-glutamate-binding positions include 148–149 (RH), Glu170, and Tyr176. Residue Pro179 participates in adenosylcob(III)alamin binding. Position 180 (Tyr180) interacts with L-glutamate. Phe296, Lys325, Glu329, and Ile333 together coordinate adenosylcob(III)alamin.

This sequence belongs to the methylaspartate mutase GlmE subunit family. As to quaternary structure, heterotetramer composed of 2 epsilon subunits (GlmE) and 2 sigma subunits (GlmS). GlmE exists as a homodimer and GlmS as a monomer. Adenosylcob(III)alamin serves as cofactor.

It catalyses the reaction (2S,3S)-3-methyl-L-aspartate = L-glutamate. It participates in amino-acid degradation; L-glutamate degradation via mesaconate pathway; acetate and pyruvate from L-glutamate: step 1/4. Its function is as follows. Catalyzes the carbon skeleton rearrangement of L-glutamate to L-threo-3-methylaspartate ((2S,3S)-3-methylaspartate). This chain is Glutamate mutase epsilon subunit, found in Shigella dysenteriae serotype 1 (strain Sd197).